The primary structure comprises 669 residues: DNA ligase (669 aa).

NAD(+) contacts are provided by residues 34–38 (DAEYD), 83–84 (SL), and glutamate 114. The active-site N6-AMP-lysine intermediate is the lysine 116. 4 residues coordinate NAD(+): arginine 137, glutamate 171, lysine 287, and lysine 311. Positions 405, 408, 423, and 428 each coordinate Zn(2+). One can recognise a BRCT domain in the interval 591 to 669 (NVESYFAGKT…EERFLQELNK (79 aa)).

It belongs to the NAD-dependent DNA ligase family. LigA subfamily. Mg(2+) serves as cofactor. Mn(2+) is required as a cofactor.

The catalysed reaction is NAD(+) + (deoxyribonucleotide)n-3'-hydroxyl + 5'-phospho-(deoxyribonucleotide)m = (deoxyribonucleotide)n+m + AMP + beta-nicotinamide D-nucleotide.. Its function is as follows. DNA ligase that catalyzes the formation of phosphodiester linkages between 5'-phosphoryl and 3'-hydroxyl groups in double-stranded DNA using NAD as a coenzyme and as the energy source for the reaction. It is essential for DNA replication and repair of damaged DNA. The sequence is that of DNA ligase from Bacillus cereus (strain ZK / E33L).